A 490-amino-acid polypeptide reads, in one-letter code: MKPKLMYQELKVPAEEPANELPMNEIEAWKAAEKKARWVLLVLILAVVGFGALMTQLFLWEYGDLHLFGPNQRPAPCYDPCEAVLVESIPEGLDFPNASTGNPSTSQAWLGLLAGAHSSLDIASFYWTLTNNDTHTQEPSAQQGEEVLRQLQTLAPKGVNVRIAVSKPNGPQPQADLQALLQSGAQVRMVDMQKLTHGVLHTKFWVVDQTHFYLGSANMDWRSLTQVKELGVVMYNCSCLARDLTKIFEAYWFLGQAGSSIPSTWPRFYDTRYNQETPMEICLNGTPALAYLASAPPPLCPSGRTPDLKALLNVVDNARSFIYVAVMNYLPTLEFSHPHRFWPAIDDGLRRAAYERGVKVRLLISCWGHSEPSMRAFLLSLAALRDNHTHSDIQVKLFVVPADEAQARIPYARVNHNKYMVTERATYIGTSNWSGNYFTETAGTSLLVTQNGRGGLRSQLEAIFLRDWDSPYSHDLDTSADSVGNACRLL.

At 1–38 (MKPKLMYQELKVPAEEPANELPMNEIEAWKAAEKKARW) the chain is on the cytoplasmic side. A helical; Signal-anchor for type II membrane protein membrane pass occupies residues 39–59 (VLLVLILAVVGFGALMTQLFL). Over 60–490 (WEYGDLHLFG…DSVGNACRLL (431 aa)) the chain is Lumenal. Intrachain disulfides connect Cys77-Cys239 and Cys81-Cys237. Residues Asn97 and Asn132 are each glycosylated (N-linked (GlcNAc...) asparagine). A PLD phosphodiesterase 1 domain is found at 196–223 (THGVLHTKFWVVDQTHFYLGSANMDWRS). Active-site residues include His201, Lys203, and Asp208. His201 serves as the catalytic Proton donor. His201 and Lys203 together coordinate phosphate. Asn218 provides a ligand contact to phosphate. N-linked (GlcNAc...) asparagine glycosylation is found at Asn236, Asn284, and Asn387. A disulfide bond links Cys366 and Cys487. In terms of domain architecture, PLD phosphodiesterase 2 spans 411-437 (YARVNHNKYMVTERATYIGTSNWSGNY). His416 provides a ligand contact to phosphate. The active-site Nucleophile is His416. Mg(2+) is bound at residue Phe438.

The protein belongs to the phospholipase D family. In terms of assembly, homodimer. Interacts with APP. Post-translationally, N-glycosylated. Proteolytically processed to a soluble form that is stable within endosomes and lysosomes. During transport through the secretory pathway becomes proteolysed by cysteine proteases, thereby releasing a stable soluble lysosomal lumenal polypeptide, whereas the transmembrane-bound fragment is rapidly degraded. Its transport route to lysosomes involves ubiquitination and the ESCRT complex. In terms of processing, ubiquitinated. Ubiquitination mediates sorting into lysosomes.

The protein resides in the endoplasmic reticulum membrane. It localises to the lysosome lumen. The protein localises to the early endosome membrane. It is found in the late endosome membrane. Its subcellular location is the golgi apparatus membrane. The protein resides in the endosome membrane. The catalysed reaction is Exonucleolytic cleavage in the 5'- to 3'-direction to yield nucleoside 3'-phosphates.. It carries out the reaction a 5'-end 5'-dephospho-ribonucleotidyl-ribonucleotide-RNA + H2O = a ribonucleoside 3'-phosphate + a 5'-end dephospho-ribonucleoside-RNA + H(+). The enzyme catalyses a ribonucleoside 3'-phosphate-2'-3'-cyclophospho-GMP + H2O = a ribonucleoside 3'-phosphate + 2',3'-cyclophospho-GMP + H(+). It catalyses the reaction a 5'-end 5'-dephospho-2'-deoxyribonucleotidyl-2'-deoxyribonucleotide in single-stranded DNA + H2O = a 5'-end dephospho-2'-deoxyribonucleoside in single-stranded DNA + a 2'-deoxyribonucleoside 3'-phosphate + H(+). The catalysed reaction is a 5'-end 5'-phospho-2'-deoxyribonucleotide in single-stranded DNA + H2O = a 5'-end 5'-dephospho-2'-deoxyribonucleotide in single-stranded DNA + phosphate. It carries out the reaction a 3-lyso-sn-glycero-1-phospho-(3'-acyl-1'-sn-glycerol) + a 1-acyl-sn-glycerol = a 3-acyl-sn-glycero-1-phospho-(3'-acyl-1'-sn-glycerol) + glycerol. The enzyme catalyses 3-lyso-sn-glycero-1-phospho-(3'-(9Z-octadecenoyl)-1'-sn-glycerol) + 1-(9Z-octadecenoyl)-sn-glycerol = 3-(9Z-octadecenoyl)-sn-glycero-1-phospho-(3'-(9Z-octadecenoyl)-1'-sn-glycerol) + glycerol. Its function is as follows. 5'-&gt;3' exonuclease that hydrolyzes the phosphodiester bond of single-stranded DNA (ssDNA) and RNA molecules to form nucleoside 3'-monophosphates and 5'-end 5'-hydroxy deoxyribonucleotide/ribonucleotide fragments. Partially redundant with PLD4, can cleave all four nucleotides displaying higher efficiency for ssDNA and RNA fragments initiated with uridine and guanosine residues and lower efficiency for cytidine-initiated substrates. As a result, it does not always degrade polynucleotides to the single nucleotide level, it can stall at specific sites sparing certain fragments from exonucleolytic degradation. Processes self and pathogenic ssDNA and RNA molecules that reach the endolysosomal compartment via phagocytosis or autophagy and may serve as 'danger' signals for recognition by innate immune receptors such as toll-like receptors (TLRs). Degrades mitochondrial CpG-rich ssDNA fragments to prevent TLR9 activation and autoinflammatory response, but it can cleave viral RNA to generate ligands for TLR7 activation and initiate antiviral immune responses. In plasmacytoid dendritic cells, it cooperates with endonuclease RNASET2 to release 2',3'-cyclic guanosine monophosphate (2',3'-cGMP), a potent stimulatory ligand for TLR7. Produces 2',3'-cGMPs and cytidine-rich RNA fragments that occupy TLR7 ligand-binding pockets and trigger a signaling-competent state. Can exert polynucleotide phosphatase activity toward 5'-phosphorylated ssDNA substrates although at a slow rate. Transphosphatidylase that catalyzes the exchange with R to S stereo-inversion of the glycerol moiety between (S,R)-lysophosphatidylglycerol (LPG) and monoacylglycerol (MAG) substrates to yield (S,S)-bis(monoacylglycero)phosphate (BMP). Can synthesize a variety of (S,S)-BMPs representing the main phospholipid constituent of lysosomal intralumenal vesicle (ILV) membranes that bind acid hydrolases for lipid degradation. Regulates the homeostasis and interorganellar communication of the endolysosomal system with an overall impact on cellular removal of dysfunctional organelles via autophagy as well as proper protein and lipid turnover. May play a role in myotube formation in response to ER stress. This Pongo abelii (Sumatran orangutan) protein is 5'-3' exonuclease PLD3 (PLD3).